Consider the following 291-residue polypeptide: Nucleotide-binding protein Lm4b_02443 (291 aa).

13 to 20 contributes to the ATP binding site; that stretch reads GMSGAGKT. 63 to 66 provides a ligand contact to GTP; sequence DLRG.

The protein belongs to the RapZ-like family.

Its function is as follows. Displays ATPase and GTPase activities. The protein is Nucleotide-binding protein Lm4b_02443 of Listeria monocytogenes serotype 4b (strain CLIP80459).